We begin with the raw amino-acid sequence, 434 residues long: MDMQLLTIGINHHTAPVALRERVAFPLEQIKPALSTFKSVFLGHPAPNAPEAAILSTCNRTELYCATNDRAARDAAIRWMSDYHRIPADELAPHVYALPQSEAVRHAFRVASGLDSMVLGETQILGQMKNAVRTASEAGSLGTYLNQLFQRTFAVAKEVRGTTEIGAQSVSMAAAAVRLAQRIFEQVAQQRVLFIGAGEMIELCATHFAAQGPRELVVANRTAERGAKLAERFGGRAMPLADLPARMHEFDIIVSCTASTLPIIGLGAVERAVKARRHRPIFMVDLAVPRDIEPEVGKLKDVFLYTVDDLGAIVREGNASRQAAVAQAEAIIETRVQNFMQWLDARSIVPVIRHMHTQADALRRAEVERARKMLARGDDPDAVLDALSQALTNKLIHGPTSALNRANGADRDSLIDLMRGFYQHAPRSSDTSDR.

Residues Thr-57 to Arg-60, Ser-116, Glu-121 to Gln-123, and Gln-127 contribute to the substrate site. Cys-58 acts as the Nucleophile in catalysis. Residue Gly-196–Ile-201 participates in NADP(+) binding.

The protein belongs to the glutamyl-tRNA reductase family. As to quaternary structure, homodimer.

It catalyses the reaction (S)-4-amino-5-oxopentanoate + tRNA(Glu) + NADP(+) = L-glutamyl-tRNA(Glu) + NADPH + H(+). It participates in porphyrin-containing compound metabolism; protoporphyrin-IX biosynthesis; 5-aminolevulinate from L-glutamyl-tRNA(Glu): step 1/2. Its function is as follows. Catalyzes the NADPH-dependent reduction of glutamyl-tRNA(Glu) to glutamate 1-semialdehyde (GSA). This chain is Glutamyl-tRNA reductase, found in Burkholderia pseudomallei (strain 1106a).